A 249-amino-acid polypeptide reads, in one-letter code: Small ribosomal subunit protein uS3 (249 aa).

The KH type-2 domain maps to 23-94 (LNEFFTRELS…TVELYAEKVQ (72 aa)). 4 positions are modified to phosphoserine: serine 32, serine 37, serine 106, and serine 141.

It belongs to the universal ribosomal protein uS3 family. Component of the small ribosomal subunit (SSU). Mature yeast ribosomes consist of a small (40S) and a large (60S) subunit. The 40S small subunit contains 1 molecule of ribosomal RNA (18S rRNA) and at least 33 different proteins. The large 60S subunit contains 3 rRNA molecules (25S, 5.8S and 5S rRNA) and at least 46 different proteins.

The protein resides in the cytoplasm. Component of the ribosome, a large ribonucleoprotein complex responsible for the synthesis of proteins in the cell. The small ribosomal subunit (SSU) binds messenger RNAs (mRNAs) and translates the encoded message by selecting cognate aminoacyl-transfer RNA (tRNA) molecules. The large subunit (LSU) contains the ribosomal catalytic site termed the peptidyl transferase center (PTC), which catalyzes the formation of peptide bonds, thereby polymerizing the amino acids delivered by tRNAs into a polypeptide chain. The nascent polypeptides leave the ribosome through a tunnel in the LSU and interact with protein factors that function in enzymatic processing, targeting, and the membrane insertion of nascent chains at the exit of the ribosomal tunnel. This is Small ribosomal subunit protein uS3 (rps3) from Schizosaccharomyces pombe (strain 972 / ATCC 24843) (Fission yeast).